The primary structure comprises 320 residues: Foldase protein PrsA (320 aa).

The signal sequence occupies residues 1 to 20 (MKMINKLIVPVTASALLLGA). The N-palmitoyl cysteine moiety is linked to residue Cys21. A lipid anchor (S-diacylglycerol cysteine) is attached at Cys21. A PpiC domain is found at 139–245 (EDSKKASHIL…FGYHIIKADK (107 aa)). Residues 159-198 (EGLDDKEAKQKAEEIQKEVSKDPSKFGEIAKKESMDTGSA) are disordered.

The protein belongs to the PrsA family.

The protein resides in the cell membrane. It catalyses the reaction [protein]-peptidylproline (omega=180) = [protein]-peptidylproline (omega=0). Functionally, plays a major role in protein secretion by helping the post-translocational extracellular folding of several secreted proteins. This chain is Foldase protein PrsA, found in Staphylococcus aureus (strain Mu3 / ATCC 700698).